A 43-amino-acid polypeptide reads, in one-letter code: Alpha-1-antiproteinase 4 (43 aa).

This sequence belongs to the serpin family. Post-translationally, N-glycosylated with carbohydrates having biantennary side chains. As to expression, plasma.

The protein resides in the secreted. This Equus caballus (Horse) protein is Alpha-1-antiproteinase 4.